We begin with the raw amino-acid sequence, 152 residues long: UPF0756 membrane protein Helmi_09930 (152 aa).

The next 5 helical transmembrane spans lie at 6–26 (VLLI…TALA), 52–72 (TGLI…KVGL), 75–95 (VLLS…VLAT), 111–131 (IIVG…GIPV), and 132–152 (GPLM…WLSK).

It belongs to the UPF0756 family.

The protein localises to the cell membrane. In Heliobacterium modesticaldum (strain ATCC 51547 / Ice1), this protein is UPF0756 membrane protein Helmi_09930.